The chain runs to 339 residues: DNA double-strand break repair nuclease NurA (339 aa).

Positions 58 and 133 each coordinate Mn(2+).

This sequence belongs to the NurA family. As to quaternary structure, homodimer. Forms a complex with HerA. Requires Mn(2+) as cofactor.

Its activity is regulated as follows. Nuclease activity requires the presence of HerA. Another report shows endo- and exonuclease activity in the absence of HerA; HerA stimulates the exo- but not endonuclease. LhrC-Core (Hel112) inhibits the exonuclease activity of the HerA-NurA complex on ss- and dsDNA, has no effect on the nicking activity of NurA. Endo- and exonuclease activities are inhibited by ATP; ATP may subtract divalent ions from the reaction preventing nuclease activity, HerA can alleviate ATP inhibition. Functionally, involved in DNA double-strand break (DSB) repair. Probably acts with HerA to stimulate resection of the 5' strand and produce the long 3' single-strand that is required for RadA loading. NurA and HerA together stimulate the end-resection of six nucleotides of a linear DNA substrate. Processes linear double-stranded (ds)DNA probes with 3' or 5' single-stranded overhangs or blunt ends. Has endonuclease activity on single-stranded (ss)DNA and nicking activity on dsDNA without HerA as well as 5'- and 3'-exonuclease activity on ssDNA. Binds ssDNA, dsDNA, forked and bubble DNA equally well. The sequence is that of DNA double-strand break repair nuclease NurA from Saccharolobus solfataricus (strain ATCC 35092 / DSM 1617 / JCM 11322 / P2) (Sulfolobus solfataricus).